Here is a 62-residue protein sequence, read N- to C-terminus: Large ribosomal subunit protein bL28 (62 aa).

The tract at residues 1–27 (MARKCVVTGRQTRSGNQRSHAMNSNKR) is disordered. Polar residues predominate over residues 9-26 (GRQTRSGNQRSHAMNSNK).

This sequence belongs to the bacterial ribosomal protein bL28 family.

This Oceanobacillus iheyensis (strain DSM 14371 / CIP 107618 / JCM 11309 / KCTC 3954 / HTE831) protein is Large ribosomal subunit protein bL28.